The following is a 237-amino-acid chain: Listeriolysin regulatory protein (237 aa).

The region spanning 137–212 (NGKLGSICGQ…NSCFYVQNLD (76 aa)) is the HTH crp-type domain.

Its function is as follows. Positively regulates expression of listeriolysin, of 1-phosphadidylinositol phosphodiesterase (PI-PLC) and other virulence factors. The polypeptide is Listeriolysin regulatory protein (prfA) (Listeria monocytogenes serovar 1/2a (strain ATCC BAA-679 / EGD-e)).